Here is a 219-residue protein sequence, read N- to C-terminus: MALPWLQRVELLLFTAAFLCGALAAATLTRTQGSFGGNCPLYGVAALNGSSLALLGPSAPSLCYFVAGASGILALYCLLLLFFWVYSSCIEDSHRGSIGLRIALAISATAIFLILVSACILRFGTNSFCNSIISLNLTISCSEAQKTSWTPSGTAVQFYSNLHTAETSSWVNLILWCLALLLQAMQCKFKATSYQPQERGDQEWSSETDALVGHHQSHS.

4 helical membrane passes run valine 9–threonine 29, phenylalanine 65–valine 85, isoleucine 98–alanine 118, and leucine 162–leucine 182. Serine 206 is subject to Phosphoserine.

This sequence belongs to the TMEM179 family.

Its subcellular location is the membrane. The sequence is that of Transmembrane protein 179B (Tmem179b) from Mus musculus (Mouse).